A 406-amino-acid chain; its full sequence is Renin (406 aa).

The first 23 residues, 1–23, serve as a signal peptide directing secretion; it reads MDGWRRMPRWGLLLLLWGSCTFG. Positions 24–66 are cleaved as a propeptide — activation peptide; that stretch reads LPTDTTTFKRIFLKRMPSIRESLKERGVDMARLGPEWSQPMKR. N-linked (GlcNAc...) asparagine glycosylation occurs at Asn-71. Positions 86–403 constitute a Peptidase A1 domain; that stretch reads YYGEIGIGTP…DRRNNRIGFA (318 aa). Asp-104 is a catalytic residue. An intrachain disulfide couples Cys-117 to Cys-124. Asn-141 carries an N-linked (GlcNAc...) asparagine glycan. A disulfide bridge links Cys-283 with Cys-287. Asp-292 is an active-site residue. A disulfide bond links Cys-325 and Cys-362.

The protein belongs to the peptidase A1 family. Interacts with ATP6AP2.

The protein localises to the secreted. It is found in the membrane. The catalysed reaction is Cleavage of Leu-|-Xaa bond in angiotensinogen to generate angiotensin I.. With respect to regulation, interaction with ATP6AP2 results in a 5-fold increased efficiency in angiotensinogen processing. Renin is a highly specific endopeptidase, whose only known function is to generate angiotensin I from angiotensinogen in the plasma, initiating a cascade of reactions that produce an elevation of blood pressure and increased sodium retention by the kidney. The protein is Renin (REN) of Macaca fascicularis (Crab-eating macaque).